Here is a 261-residue protein sequence, read N- to C-terminus: Acidic leucine-rich nuclear phosphoprotein 32 family member A (261 aa).

4 LRR repeats span residues 16 to 37 (QITE…TDEY), 39 to 60 (ALES…PKLP), 61 to 83 (NLKK…TTSP), and 84 to 105 (KLQY…KPLE). One can recognise an LRRCT domain in the interval 118 to 156 (NDATQVDNYREKIFKMLPSLNFLDGFDCNDEEVQSDGDD). 2 stretches are compositionally biased toward acidic residues: residues 145–185 (CNDE…EEAN) and 194–229 (YNDD…DGDA). The interval 145–261 (CNDEEVQSDG…VRGKKRKHDG (117 aa)) is disordered. Residues 238 to 252 (AKDKDGEKEADESQV) are compositionally biased toward basic and acidic residues.

The protein belongs to the ANP32 family. In terms of processing, phosphorylated on serine residues.

The protein localises to the nucleus. It localises to the cytoplasm. Implicated in a number of cellular processes, including proliferation, differentiation, caspase-dependent and caspase-independent apoptosis, suppression of transformation (tumor suppressor), inhibition of protein phosphatase 2A, regulation of mRNA trafficking and stability, and inhibition of acetyltransferases as part of the INHAT (inhibitor of histone acetyltransferases) complex. The polypeptide is Acidic leucine-rich nuclear phosphoprotein 32 family member A (Anp32a) (Drosophila melanogaster (Fruit fly)).